The chain runs to 2016 residues: Sodium channel protein type 5 subunit alpha (2016 aa).

At 1–129 (MANFLLPRGT…IRRAAVKILV (129 aa)) the chain is on the cytoplasmic side. The segment at 28–56 (MAEKQARGSTTLQESREGLPEEEAPRPQL) is disordered. S36 bears the Phosphoserine mark. The residue at position 38 (T38) is a Phosphothreonine. Basic and acidic residues predominate over residues 41-52 (ESREGLPEEEAP). The stretch at 113–420 (VLSPFHPIRR…VVAMAYEEQN (308 aa)) is one I repeat. A helical membrane pass occupies residues 130–149 (HSLFNMLIMCTILTNCVFMA). Over 150–157 (QHDPPPWT) the chain is Extracellular. A helical membrane pass occupies residues 158-179 (KYVEYTFTAIYTFESLVKILAR). Topologically, residues 180–188 (GFCLHAFTF) are cytoplasmic. The chain crosses the membrane as a helical span at residues 189–209 (LRDPWNWLDFSVIIMAYTTEF). Over 210–216 (VDLGNVS) the chain is Extracellular. A glycan (N-linked (GlcNAc...) asparagine) is linked at N214. A helical membrane pass occupies residues 217-236 (ALRTFRVLRALKTISVISGL). Residues 237-249 (KTIVGALIQSVKK) are Cytoplasmic-facing. Residues 250–272 (LADVMVLTVFCLSVFALIGLQLF) form a helical membrane-spanning segment. Topologically, residues 273–357 (MGNLRHKCVR…PDHGYTSFDS (85 aa)) are extracellular. C280 and C335 are joined by a disulfide. N-linked (GlcNAc...) asparagine glycans are attached at residues N283, N288, N291, N318, and N328. The segment at residues 358 to 378 (FAWAFLALFRLMTQDCWERLY) is an intramembrane region (pore-forming). The Extracellular segment spans residues 379-386 (QQTLRSAG). A helical transmembrane segment spans residues 387–413 (KIYMIFFMLVIFLGSFYLVNLILAVVA). The Cytoplasmic portion of the chain corresponds to 414–719 (MAYEEQNQAT…VKLVVMDPFT (306 aa)). A phosphoserine mark is found at S457, S460, S483, and S484. Positions 461-591 (LEMSPLAPVN…APGHALHGKK (131 aa)) are disordered. At T486 the chain carries Phosphothreonine. Residues 491–503 (EDRLPKSDSEDGP) are compositionally biased toward basic and acidic residues. S497 and S510 each carry phosphoserine. A compositionally biased stretch (polar residues) spans 509-528 (LSLTRGLSRTSMKPRSSRGS). Dimethylated arginine; alternate is present on residues R513 and R526. Omega-N-methylarginine; alternate occurs at positions 513 and 526. S539, S571, S664, and S667 each carry phosphoserine. Residues 570–580 (TSAQGQPSPGT) are compositionally biased toward polar residues. R680 carries the post-translational modification Dimethylated arginine; alternate. Omega-N-methylarginine; alternate is present on R680. The II repeat unit spans residues 699 to 969 (CCPLWMSIKQ…QLALARIQRG (271 aa)). The helical transmembrane segment at 720–737 (DLTITMCIVLNTLFMALE) threads the bilayer. The Extracellular segment spans residues 738–746 (HYNMTSEFE). N740 carries N-linked (GlcNAc...) asparagine glycosylation. Residues 747 to 769 (EMLQVGNLVFTGIFTAEMTFKII) traverse the membrane as a helical segment. Residues 770 to 775 (ALDPYY) lie on the Cytoplasmic side of the membrane. Residues 776-796 (YFQQGWNIFDSIIVILSLMEL) traverse the membrane as a helical segment. The Extracellular segment spans residues 797 to 806 (GLSRMSNLSV). A glycan (N-linked (GlcNAc...) asparagine) is linked at N803. A helical membrane pass occupies residues 807–821 (LRSFRLLRVFKLAKS). Over 822–838 (WPTLNTLIKIIGNSVGA) the chain is Cytoplasmic. Residues 839 to 860 (LGNLTLVLAIIVFIFAVVGMQL) traverse the membrane as a helical segment. The Extracellular segment spans residues 861-884 (FGKNYSELRDSDSGLLPRWHMMDF). Residue N864 is glycosylated (N-linked (GlcNAc...) asparagine). Residues 885–903 (FHAFLIIFRILCGEWIETM) constitute an intramembrane region (pore-forming). The Extracellular segment spans residues 904–912 (WDCMEVSGQ). C906 and C915 are joined by a disulfide. A helical transmembrane segment spans residues 913–941 (SLCLLVFLLVMVIGNLVVLNLFLALLLSS). Residues 942 to 1203 (FSADNLTAPD…LRKTCYHIVE (262 aa)) lie on the Cytoplasmic side of the membrane. Residues 1005–1141 (IATPYSPPPP…PEDSCSEGST (137 aa)) form a disordered region. Basic and acidic residues predominate over residues 1015–1030 (ETEKVPPTRKETRFEE). Over residues 1033-1044 (QPGQGTPGDPEP) the composition is skewed to low complexity. Residues 1054-1071 (SDTDDQEEDEENSLGTEE) show a composition bias toward acidic residues. A compositionally biased stretch (low complexity) spans 1096 to 1113 (SQVSATASSEAEASASQA). Residues 1187-1501 (PGKVWWRLRK…KKYYNAMKKL (315 aa)) form an III repeat. A helical transmembrane segment spans residues 1204–1225 (HSWFETFIIFMILLSSGALAFE). Residues 1226-1236 (DIYLEERKTIK) lie on the Extracellular side of the membrane. The chain crosses the membrane as a helical span at residues 1237–1259 (VLLEYADKMFTYVFVLEMLLKWV). The Cytoplasmic segment spans residues 1260–1268 (AYGFKKYFT). The helical transmembrane segment at 1269–1291 (NAWCWLDFLIVDVSLVSLVANTL) threads the bilayer. At 1292–1297 (GFAEMG) the chain is on the extracellular side. The helical transmembrane segment at 1298–1317 (PIKSLRTLRALRPLRALSRF) threads the bilayer. The Cytoplasmic portion of the chain corresponds to 1318 to 1330 (EGMRVVVNALVGA). A helical membrane pass occupies residues 1331–1355 (IPSIMNVLLVCLIFWLIFSIMGVNL). Residues 1356-1400 (FAGKFGRCINQTEGDLPLNYTIVNNKSQCESLNLTGELYWTKVKV) are Extracellular-facing. N1365, N1374, N1380, and N1388 each carry an N-linked (GlcNAc...) asparagine glycan. The pore-forming intramembrane region spans 1401–1422 (NFDNVGAGYLALLQVATFKGWM). Residues 1423–1445 (DIMYAAVDSRGYEEQPQWEYNLY) lie on the Extracellular side of the membrane. Residues 1446-1470 (MYIYFVIFIIFGSFFTLNLFIGVII) traverse the membrane as a helical segment. Residues 1471–1528 (DNFNQQKKKLGGQDIFMTEEQKKYYNAMKKLGSKKPQKPIPRPLNKYQGFIFDIVTKQ) are Cytoplasmic-facing. Phosphoserine; by PKC is present on S1503. Residues 1510–1807 (IPRPLNKYQG…WEKFDPEATQ (298 aa)) form an IV repeat. A helical transmembrane segment spans residues 1529–1547 (AFDVTIMFLICLNMVTMMV). The Extracellular segment spans residues 1548-1558 (ETDDQSPEKIN). Residues 1559 to 1580 (ILAKINLLFVAIFTGECIVKLA) form a helical membrane-spanning segment. Residues 1581–1589 (ALRHYYFTN) lie on the Cytoplasmic side of the membrane. A helical transmembrane segment spans residues 1590 to 1612 (SWNIFDFVVVILSIVGTVLSDII). Residues 1613–1619 (QKYFFSP) are Extracellular-facing. The helical transmembrane segment at 1620-1640 (TLFRVIRLARIGRILRLIRGA) threads the bilayer. At 1641–1650 (KGIRTLLFAL) the chain is on the cytoplasmic side. The helical transmembrane segment at 1651 to 1679 (MMSLPALFNIGLLLFLVMFIYSIFGMANF) threads the bilayer. Residues 1680-1697 (AYVKWEAGIDDMFNFQTF) are Extracellular-facing. The pore-forming intramembrane region spans 1698 to 1714 (ANSMLCLFQITTSAGWD). Over 1715–1745 (GLLSPILNTGPPYCDPTLPNSNGSRGDCGSP) the chain is Extracellular. N1736 carries an N-linked (GlcNAc...) asparagine glycan. The helical transmembrane segment at 1746-1771 (AVGILFFTTYIIISFLIVVNMYIAII) threads the bilayer. Over 1772–2016 (LENFSVATEE…SPDRDRESIV (245 aa)) the chain is Cytoplasmic. An interaction with FGF13 region spans residues 1839–1901 (DLPMVSGDRI…ITTTLRRKHE (63 aa)). Residues 1901 to 1930 (EEVSAMVIQRAFRRHLLQRSLKHASFLFRQ) enclose the IQ domain. Positions 1959-1979 (PLGPPSSSSISSTSFPPSYDS) are enriched in low complexity. The interval 1959 to 2016 (PLGPPSSSSISSTSFPPSYDSVTRATSDNLQVRGSDYSHSEDLADFPPSPDRDRESIV) is disordered. Residues 1974–1977 (PPSY) are interaction with NEDD4, NEDD4L and WWP2. Residues 1981–1990 (TRATSDNLQV) are compositionally biased toward polar residues.

The protein belongs to the sodium channel (TC 1.A.1.10) family. Nav1.5/SCN5A subfamily. Cannot form the same regulatory interactions with beta subunits as other Navs do. Interacts with the PDZ domain of the syntrophin SNTA1, SNTB1 and SNTB2. Interacts with NEDD4, NEDD4L, WWP2 and GPD1L. Interacts with CALM. Interacts with FGF13; the interaction is direct and FGF13 may regulate SNC5A density at membranes and function. May also interact with FGF12 and FGF14. Interacts with TMEM233. Interacts with the spider Jingzhaotoxin-I (AC P83974, AC B1P1B7, AC B1P1B8). Interacts with ANK3. Interacts with PKP2 (via N-terminus). Interacts with XIRP2; the interaction is required for normal action potential configuration in the heart. Ubiquitinated by NEDD4L; which promotes its endocytosis. Does not seem to be ubiquitinated by NEDD4 or WWP2. Post-translationally, phosphorylation at Ser-1503 by PKC in a highly conserved cytoplasmic loop slows inactivation of the sodium channel and reduces peak sodium currents. Regulated through phosphorylation by CaMK2D. In terms of processing, lacks the cysteine which covalently binds the conotoxin GVIIJ. This cysteine (position 868) is speculated in other sodium channel subunits alpha to be implied in covalent binding with the sodium channel subunit beta-2 or beta-4. N-glycosylated at Asn-318, probably hinders potential interaction with regulatory subunits. In terms of tissue distribution, found in jejunal circular smooth muscle cells (at protein level). Expressed in human atrial and ventricular cardiac muscle but not in adult skeletal muscle, brain, myometrium, liver, or spleen. Isoform 4 is expressed in brain.

Its subcellular location is the cell membrane. It is found in the cytoplasm. The protein resides in the perinuclear region. The protein localises to the sarcolemma. It localises to the T-tubule. Its subcellular location is the cell junction. The catalysed reaction is Na(+)(in) = Na(+)(out). Its activity is regulated as follows. Channel inactivation is regulated by intracellular calcium levels. It is a tetrodotoxin-resistant voltage-gated Na(+) channel (Nav). Functionally, pore-forming subunit of Nav1.5, a voltage-gated sodium (Nav) channel that directly mediates the depolarizing phase of action potentials in excitable membranes. Navs, also called VGSCs (voltage-gated sodium channels) or VDSCs (voltage-dependent sodium channels), operate by switching between closed and open conformations depending on the voltage difference across the membrane. In the open conformation they allow Na(+) ions to selectively pass through the pore, along their electrochemical gradient. The influx of Na(+) ions provokes membrane depolarization, initiating the propagation of electrical signals throughout cells and tissues. Nav1.5 is the predominant sodium channel expressed in myocardial cells and it is responsible for the initial upstroke of the action potential in cardiac myocytes, thereby initiating the heartbeat. Required for normal electrical conduction including formation of the infranodal ventricular conduction system and normal action potential configuration, as a result of its interaction with XIRP2. The sequence is that of Sodium channel protein type 5 subunit alpha from Homo sapiens (Human).